The sequence spans 130 residues: Ribonuclease P protein component 2 (130 aa).

The protein belongs to the eukaryotic/archaeal RNase P protein component 2 family. Consists of a catalytic RNA component and at least 4-5 protein subunits.

Its subcellular location is the cytoplasm. It catalyses the reaction Endonucleolytic cleavage of RNA, removing 5'-extranucleotides from tRNA precursor.. Its function is as follows. Part of ribonuclease P, a protein complex that generates mature tRNA molecules by cleaving their 5'-ends. The polypeptide is Ribonuclease P protein component 2 (Methanococcus maripaludis (strain C5 / ATCC BAA-1333)).